The following is a 1833-amino-acid chain: Proteasome activator complex subunit 4A (1833 aa).

HEAT repeat units lie at residues 460–504 (PEGP…LVDC) and 983–1022 (NFCCRDIIPVVLKYLDPERTDVTQQQFKGALYCLLGNHSG). The interval 1095–1122 (SSSPEPNPGAASEQEELEGRKREEQKNK) is disordered. Positions 1111-1122 (LEGRKREEQKNK) are enriched in basic and acidic residues. HEAT repeat units follow at residues 1164–1202 (LPLPSSAVLFFVESLNHDSLLVRNVAISAVAGILKQLKR), 1344–1382 (DAFLPLLKPHMERLVADSHESPQRCVAEIISGLIRGSKH), 1626–1664 (SDQIPQVLSALEEISRSSSWHARYTILTYLQIMVFYNLF), and 1670–1708 (AKAVCDVRALVLRLLEDEQLEVREMAATTLSGFLQCNFL). The interval 1640 to 1728 (SRSSSWHARY…ESLSKTRLPK (89 aa)) is bromodomain-like (BRDL).

The protein belongs to the BLM10 family. In terms of assembly, homodimer. Interacts with the 20S and 26S proteasomes.

It is found in the cytoplasm. The protein resides in the cytosol. The protein localises to the nucleus. Its subcellular location is the nucleus speckle. Associated component of the proteasome that specifically recognizes acetylated histones and promotes ATP- and ubiquitin-independent degradation of core histones during DNA damage response. Recognizes and binds acetylated histones via its bromodomain-like (BRDL) region and activates the proteasome by opening the gated channel for substrate entry. Binds to the core proteasome via its C-terminus, which occupies the same binding sites as the proteasomal ATPases, opening the closed structure of the proteasome via an active gating mechanism. involved in DNA damage response in somatic cells: binds to acetylated histones and promotes degradation of histones. This chain is Proteasome activator complex subunit 4A (psme4a), found in Danio rerio (Zebrafish).